Here is a 293-residue protein sequence, read N- to C-terminus: MAVVHAEGNVWIKQWDHRFHMYGGQTCSPLMAGSWDDRTPLHDAALQGRLLPLRRLLSQGYNVGMATLDGITALHEACVGGHFTCAKLLLEHGADANAVTFDGATPLFSACCSGNPALVSLILTHSSAHHPAHLLCSPLHEAAKRGHTACVELLLSHGVNVDMELPSVGTALYCACEVKSTDCVLTLLILGADVQCGRGLDTPLHAACRVGGAKEAELLLEHGADRTSRNSEGKTPLDLTSDQSIKHLLQTAGTCSLSQLCRWCIRRSLGQKGLNKTKTLCLPHMLHNYLLYH.

7 ANK repeats span residues 36-65, 69-98, 102-131, 134-163, 167-196, 199-228, and 232-259; these read DDRT…NVGM, DGIT…DANA, DGAT…AHHP, LLCS…NVDM, SVGT…DVQC, GLDT…DRTS, and EGKT…SLSQ. The SOCS box domain maps to 244-293; that stretch reads SIKHLLQTAGTCSLSQLCRWCIRRSLGQKGLNKTKTLCLPHMLHNYLLYH.

This sequence belongs to the ankyrin SOCS box (ASB) family. In terms of assembly, substrate-recognition component of the ECS(ASB11) complex, composed of asb11, cul5, elob, eloc and rnf7/rbx2. Expressed in the developing nervous system: localizes to neural plate margins and is abutting the proneuronal zone.

It is found in the endoplasmic reticulum. Its pathway is protein modification; protein ubiquitination. In terms of biological role, substrate-recognition component of a cullin-5-RING E3 ubiquitin-protein ligase complex (ECS complex, also named CRL5 complex), which mediates the ubiquitination and subsequent proteasomal degradation of target proteins. Acts as a regulator of the neuronal progenitor compartment size by maintaining the neural precursors in the proliferating undifferentiated state. The ECS(ASB11) complex acts as a positive regulator of Notch signaling pathway by mediating ubiquitination and degradation of DeltaA (dla). Also acts as a regulator of regenerative myogenesis. The sequence is that of Ankyrin repeat and SOCS box protein 11 from Danio rerio (Zebrafish).